A 1138-amino-acid chain; its full sequence is Envelopment polyprotein (1138 aa).

The first 18 residues, 1–18 (MEGWYLVVLGVCYTLTLA), serve as a signal peptide directing secretion. Topologically, residues 19–487 (MPKTIYELKM…CVPGLHGWAT (469 aa)) are lumenal. Cystine bridges form between Cys30/Cys155, Cys64/Cys161, Cys113/Cys132, Cys137/Cys142, Cys179/Cys189, Cys214/Cys250, Cys239/Cys354, Cys379/Cys438, Cys383/Cys392, Cys408/Cys427, and Cys455/Cys478. An N-linked (GlcNAc...) asparagine; by host glycan is attached at Asn138. Asn350 carries an N-linked (GlcNAc...) asparagine; by host glycan. Asn402 is a glycosylation site (N-linked (GlcNAc...) asparagine; by host). Residues 488–508 (VMLLSTFCFGWVLIPAVTLII) form a helical membrane-spanning segment. At 509 to 630 (LKCLRVLTFS…LGVFRYKSRC (122 aa)) the chain is on the cytoplasmic side. The segment at 519-536 (CSHYTNESKFKFILEKVK) is binding to the ribonucleoprotein. 2 consecutive CCHC-type zinc fingers follow at residues 548-568 (CDVCHHECETAKELESHRQSC) and 573-594 (CPYCMTITEATESALQAHYSIC). Binding to the ribonucleoprotein stretches follow at residues 591 to 608 (YSICKLTGRFQEALKKSL), 595 to 606 (KLTGRFQEALKK), and 614 to 628 (KKGCYRTLGVFRYKS). The interval 610-637 (KPEVKKGCYRTLGVFRYKSRCYVGLVWC) is interaction with host TRAF3. One can recognise an ITAM domain in the interval 614–637 (KKGCYRTLGVFRYKSRCYVGLVWC). Tyr618 and Tyr631 each carry phosphotyrosine. Residues 618–621 (YRTL) carry the YxxL motif. A helical membrane pass occupies residues 631–651 (YVGLVWCLLLTCEIVIWAASA). Residues 652 to 1107 (ETPLMESGWS…EWLLGILNGN (456 aa)) are Lumenal-facing. Intrachain disulfides connect Cys738–Cys773, Cys742–Cys780, Cys754–Cys887, Cys768–Cys898, Cys783–Cys906, Cys809–Cys818, Cys826–Cys835, and Cys866–Cys870. Residues 760-780 (YQYETGWGCNPGDCPGVGTGC) form a fusion loop region. Asn930 is a glycosylation site (N-linked (GlcNAc...) asparagine; by host). Cystine bridges form between Cys972-Cys1002, Cys995-Cys1047, Cys1012-Cys1017, Cys1048-Cys1053, and Cys1087-Cys1091. A helical membrane pass occupies residues 1108–1128 (WIVVVVLVVILILSIIMFSVL). Positions 1124–1138 (MFSVLCPRRGHKKTV) are binding to the ribonucleoprotein. Residues 1129-1138 (CPRRGHKKTV) are Cytoplasmic-facing.

The protein belongs to the hantavirus envelope glycoprotein family. As to quaternary structure, homodimer. Homotetramer; forms heterotetrameric Gn-Gc spikes in the pre-fusion conformation. Interacts (via C-terminus) with the nucleoprotein. Interacts with host TUFM; this interaction contributes to the virus-induced degradation of mitochondria by autophagy, which leads to degradation of host MAVS and inhibition of type I interferon (IFN) responses. Interacts with host MAP1LC3B; this interaction contributes to the virus-induced degradation of mitochondria by autophagy, which leads to degradation of host MAVS and inhibition of type I interferon (IFN) responses. Interacts (via C-terminus) with host TRAF3; this interaction inhibits the formation of TRAF3-TBK1 complexes. In terms of assembly, homodimer. Homotetramer; forms heterotetrameric Gn-Gc spikes in the pre-fusion conformation. Homotrimer; forms homotrimer in the post-fusion conformation at acidic pH. Interacts (via C-terminus) with the nucleoprotein. Envelope polyprotein precursor is quickly cleaved in vivo just after synthesis, presumably by host signal peptidase.

It localises to the virion membrane. The protein localises to the host cell surface. It is found in the host Golgi apparatus membrane. The protein resides in the host endoplasmic reticulum membrane. Its subcellular location is the host mitochondrion. Forms homotetramers with glycoprotein C at the surface of the virion. Attaches the virion to host cell receptors including integrin ITGAV/ITGB3. This attachment induces virion internalization possibly through clathrin-dependent endocytosis and dynamin-independent macropinocytosis. Mediates the assembly and budding of infectious virus particles through its interaction with the nucleocapsid protein and the viral genome. May dysregulate normal immune and endothelial cell responses through an ITAM motif. Translocates to mitochondria, binds to host TUFM and recruits MAP1LC3B. These interactions induce mitochondrial autophagy and therefore destruction of host MAVS leading to inhibition of type I interferon (IFN) responses. Concomitant breakdown of glycoprotein N is apparently prevented by the nucleoprotein that may inhibit Gn-stimulated autophagosome-lysosome fusion. Interacts with the viral genomic RNA. Inhibits the host RIG-I/TBK1 pathway by disrupting the formation of TBK1-TRAF3 complexes and downstream signaling responses required for IFN-beta transcription. Its function is as follows. Forms homotetramers with glycoprotein N at the surface of the virion. Attaches the virion to host cell receptors including integrin ITGAV/ITGB3. This attachment induces virion internalization predominantly through clathrin-dependent endocytosis. Class II fusion protein that promotes fusion of viral membrane with host endosomal membrane after endocytosis of the virion. This is Envelopment polyprotein (GP) from Abrothrix longipilis (Long-haired grass mouse).